Reading from the N-terminus, the 806-residue chain is MTNKTSPATESATYPVLPLRDIVVFPHMIVPLFVGREKSIRALEEVMGTDKQIMLVTQINATDDDPEPSAIYKVGTIANVLQLLKLPDGTVKVLVEGRSRAEIERYTPRDDFYEAMAHALPEPDEDPVEIEALSRSVVSEFESYVKLNKKISPEVVGVASQIEDYSKLADTVASHLSIKIVEKQEMLETTSVKMRLEKALGFMEGEISVLQVEKRIRSRVKRQMEKTQREYYLNEQMKAIQKELGDSEDGRDEMAELEERISKTKLSKEAREKADAELKKLRQMSPMSAEATVVRNYLDWLLGLPWGKKSKIKTDLNHAEKVLDTDHFGLDKVKERIVEYLAVQARSSKIKGPILCLVGPPGVGKTSLAKSIAKATGREYIRMALGGVRDEAEIRGHRRTYIGSMPGKVVQSMKKAKKSNPLFLLDEIDKMGQDFRGDPSSALLEVLDPEQNSTFMDHYLEVEYDLSNVMFITTANTLNIPPPLMDRMEVIRIAGYTEDEKREIAKRHLLPKAIRDHALQPNEFSVTDGALMAVIQNYTREAGVRNFERELMKLARKAVTEILKGKTKKVEVTAENIHDYLGVPRFRHGEAERDDQVGVVTGLAWTEVGGELLTIEGVMMPGKGRMTVTGNLRDVMKESISAAASYVRSRAIDFGIEPPLFDKRDIHVHVPEGATPKDGPSAGVAMATAIVSVMTGIPISKDVAMTGEITLRGRVLPIGGLKEKLLAALRGGIKKVLIPEENAKDLADIPDNVKNSLEIIPVSRMGEVIAHALLRLPEPIEWDPASQPAALPSVDSQDEAGTSIAH.

Positions 14–207 (YPVLPLRDIV…KALGFMEGEI (194 aa)) constitute a Lon N-terminal domain. 359-366 (GPPGVGKT) contacts ATP. One can recognise a Lon proteolytic domain in the interval 594-775 (DDQVGVVTGL…GEVIAHALLR (182 aa)). Active-site residues include serine 681 and lysine 724. The segment at 786-806 (SQPAALPSVDSQDEAGTSIAH) is disordered.

This sequence belongs to the peptidase S16 family. In terms of assembly, homohexamer. Organized in a ring with a central cavity.

The protein resides in the cytoplasm. It catalyses the reaction Hydrolysis of proteins in presence of ATP.. Its function is as follows. ATP-dependent serine protease that mediates the selective degradation of mutant and abnormal proteins as well as certain short-lived regulatory proteins. Required for cellular homeostasis and for survival from DNA damage and developmental changes induced by stress. Degrades polypeptides processively to yield small peptide fragments that are 5 to 10 amino acids long. Binds to DNA in a double-stranded, site-specific manner. In R.meliloti it is important for controlling the turnover of a constitutively expressed protein(s) that, when unregulated, disrupts normal nodule formation and normal growth. The chain is Lon protease from Rhizobium meliloti (strain 1021) (Ensifer meliloti).